The primary structure comprises 128 residues: Large ribosomal subunit protein uL22 (128 aa).

This sequence belongs to the universal ribosomal protein uL22 family. Part of the 50S ribosomal subunit.

Functionally, this protein binds specifically to 23S rRNA; its binding is stimulated by other ribosomal proteins, e.g. L4, L17, and L20. It is important during the early stages of 50S assembly. It makes multiple contacts with different domains of the 23S rRNA in the assembled 50S subunit and ribosome. The globular domain of the protein is located near the polypeptide exit tunnel on the outside of the subunit, while an extended beta-hairpin is found that lines the wall of the exit tunnel in the center of the 70S ribosome. The sequence is that of Large ribosomal subunit protein uL22 from Nitrobacter winogradskyi (strain ATCC 25391 / DSM 10237 / CIP 104748 / NCIMB 11846 / Nb-255).